The sequence spans 1321 residues: Probable serine/threonine-protein kinase fnkE (1321 aa).

FNIP repeat units follow at residues 108–149, 150–191, 192–233, and 255–296; these read YNQL…NLSS, YNQP…DLSS, YNKL…DLSS, and YNKL…DISS. The region spanning 295-595 is the Protein kinase 1 domain; sequence SSYNQLLTPG…YNYVIKDSIM (301 aa). ATP is bound by residues 301–309 and K325; that span reads LTPGTLSNN. D465 serves as the catalytic Proton acceptor. 2 FNIP repeats span residues 654 to 696 and 741 to 783; these read FNHP…FNKF and FNQP…LGSN. Residues 860–1128 form the Protein kinase 2 domain; it reads WEIISTLGSG…EGDSVFEKYL (269 aa). ATP-binding positions include 866–874 and K895; that span reads LGSGNFGKV. The Proton acceptor role is filled by D990. FNIP repeat units follow at residues 1160–1202 and 1224–1268; these read YNQM…LGNE and FNFT…LGSN.

Belongs to the protein kinase superfamily. STE Ser/Thr protein kinase family. The cofactor is Mg(2+).

It catalyses the reaction L-seryl-[protein] + ATP = O-phospho-L-seryl-[protein] + ADP + H(+). The enzyme catalyses L-threonyl-[protein] + ATP = O-phospho-L-threonyl-[protein] + ADP + H(+). In Dictyostelium discoideum (Social amoeba), this protein is Probable serine/threonine-protein kinase fnkE.